The chain runs to 1730 residues: Nebulin-related-anchoring protein (1730 aa).

An LIM zinc-binding domain is found at 4–64 (QPCSRCGYGV…HAHNPKNNTF (61 aa)). 44 Nebulin repeats span residues 63-97 (TFTS…QCKS), 156-166 (EYTEDYEQPRG), 175-202 (TPAY…ERIS), 203-237 (RFST…QQRG), 246-273 (TPAY…KEMR), 298-307 (YPEEYEEHRG), 316-343 (TPAY…KMKG), 348-382 (HSLP…SSRG), 389-417 (ETPQ…NHMR), 419-453 (RYEG…HDIV), 487-521 (KYSS…KNKL), 522-556 (NYTL…KTKG), 558-592 (GFEM…KTKG), 602-626 (LLHS…ESKT), 627-661 (RFHL…EYTV), 662-692 (LPED…WMKG), 702-724 (NLEQ…RVDE), 726-760 (KFTS…QSVH), 761-795 (QYTI…NQKA), 797-831 (GFEL…RSRG), 844-869 (QMSH…DTKS), 870-896 (QCHV…VGYK), 901-935 (HFTA…WMKG), 945-963 (NVEQ…KYRQ), 969-1003 (KFTS…NIKH), 1004-1038 (HYTP…KLRD), 1040-1074 (GYKL…KMKG), 1078-1112 (GSRS…HSKA), 1113-1139 (QFHL…QDYK), 1144-1178 (QYTS…FMRG), 1183-1206 (IPGT…KYRQ), 1212-1246 (KYTA…DARH), 1247-1281 (EYTM…NLRA), 1283-1317 (GYKL…KERG), 1321-1355 (GPQS…SSQA), 1356-1390 (QFHL…KFTA), 1391-1421 (LPED…GMKG), 1429-1449 (SPQM…KYRK), 1455-1481 (KFTT…RMYR), 1490-1524 (RYTL…QTRA), 1526-1560 (SYDF…RDRG), 1564-1598 (GYRS…KSRS), 1599-1626 (QFHS…HYRQ), and 1640-1664 (LRHA…LTRG). Ser-1081 bears the Phosphoserine mark. The segment at 1595–1620 (KSRSQFHSSTDQPGLLQAKRSQQLAS) is disordered. Polar residues predominate over residues 1596–1606 (SRSQFHSSTDQ).

Interacts with actin, alpha-actinin, KLHL41, TLN1 and VCL. Interacts with CSRP3. As to expression, expressed in cardiac and skeletal muscle.

In terms of biological role, may be involved in anchoring the terminal actin filaments in the myofibril to the membrane and in transmitting tension from the myofibrils to the extracellular matrix. The sequence is that of Nebulin-related-anchoring protein from Homo sapiens (Human).